Reading from the N-terminus, the 643-residue chain is DNA-directed RNA polymerase subunit beta' (643 aa).

Zn(2+) is bound by residues Cys83, Cys85, Cys98, and Cys101. 3 residues coordinate Mg(2+): Asp480, Asp482, and Asp484.

Belongs to the RNA polymerase beta' chain family. RpoC1 subfamily. As to quaternary structure, in plastids the minimal PEP RNA polymerase catalytic core is composed of four subunits: alpha, beta, beta', and beta''. When a (nuclear-encoded) sigma factor is associated with the core the holoenzyme is formed, which can initiate transcription. Mg(2+) serves as cofactor. The cofactor is Zn(2+).

It localises to the plastid. The protein resides in the organellar chromatophore. It carries out the reaction RNA(n) + a ribonucleoside 5'-triphosphate = RNA(n+1) + diphosphate. DNA-dependent RNA polymerase catalyzes the transcription of DNA into RNA using the four ribonucleoside triphosphates as substrates. This chain is DNA-directed RNA polymerase subunit beta', found in Paulinella chromatophora.